The primary structure comprises 65 residues: Large ribosomal subunit protein bL33 (65 aa).

Residues 20 to 40 (VPPSEKRSPGVSRYTTEKNRR) are disordered.

The protein belongs to the bacterial ribosomal protein bL33 family.

This is Large ribosomal subunit protein bL33 from Prochlorococcus marinus (strain MIT 9211).